The chain runs to 244 residues: Probable Ni/Fe-hydrogenase B-type cytochrome subunit (244 aa).

Transmembrane regions (helical) follow at residues 39–59 (LWHW…FFIG), 73–93 (FLMG…AIGM), 150–171 (FAMF…FAMY), and 204–221 (LGMW…YAAI).

This sequence belongs to the HupC/HyaC/HydC family.

The protein localises to the cell membrane. Its function is as follows. Probable b-type cytochrome. This is Probable Ni/Fe-hydrogenase B-type cytochrome subunit (hoxZ) from Cupriavidus necator (strain ATCC 17699 / DSM 428 / KCTC 22496 / NCIMB 10442 / H16 / Stanier 337) (Ralstonia eutropha).